Here is a 568-residue protein sequence, read N- to C-terminus: Proline--tRNA ligase (568 aa).

The protein belongs to the class-II aminoacyl-tRNA synthetase family. ProS type 1 subfamily. As to quaternary structure, homodimer.

Its subcellular location is the cytoplasm. The catalysed reaction is tRNA(Pro) + L-proline + ATP = L-prolyl-tRNA(Pro) + AMP + diphosphate. In terms of biological role, catalyzes the attachment of proline to tRNA(Pro) in a two-step reaction: proline is first activated by ATP to form Pro-AMP and then transferred to the acceptor end of tRNA(Pro). As ProRS can inadvertently accommodate and process non-cognate amino acids such as alanine and cysteine, to avoid such errors it has two additional distinct editing activities against alanine. One activity is designated as 'pretransfer' editing and involves the tRNA(Pro)-independent hydrolysis of activated Ala-AMP. The other activity is designated 'posttransfer' editing and involves deacylation of mischarged Ala-tRNA(Pro). The misacylated Cys-tRNA(Pro) is not edited by ProRS. This chain is Proline--tRNA ligase, found in Aliarcobacter butzleri (strain RM4018) (Arcobacter butzleri).